Consider the following 1158-residue polypeptide: Teashirt homolog 1 (1158 aa).

3 disordered regions span residues 70–126 (DDGR…DMDT), 170–228 (INST…ANNG), and 310–341 (TGHYRDDNKDKEEDRGKKWSKPRKRSLMEMEG). A compositionally biased stretch (polar residues) spans 76–88 (LSYQNSPLSNGTN). Low complexity-rich tracts occupy residues 186–205 (SHASTIASSGASSSSNASAS) and 213–228 (SSNSTKATTLTNANNG). 2 consecutive C2H2-type zinc fingers follow at residues 288–312 (FRCKDCSAAYDTLVGLTVHMNETGH) and 349–373 (LKCMYCGHSFESLQDLSVHMIKTKH). A compositionally biased stretch (basic and acidic residues) spans 310-326 (TGHYRDDNKDKEEDRGK). Residues 405 to 425 (PCSPDSISSTPGIPLAETAPT) form a disordered region. The C2H2-type 3 zinc finger occupies 461–485 (LKCMECGSSHDTLQQLTAHMMVTGH). 3 disordered regions span residues 516–573 (PPTT…VEKS), 656–681 (LKSLTSDSSTLIHSPSSPSPPPNHKS), and 693–748 (VTGK…VDKD). Residues 555–573 (EEKKIKQEKEDPSERVEKS) are compositionally biased toward basic and acidic residues. The span at 656–671 (LKSLTSDSSTLIHSPS) shows a compositional bias: low complexity. 2 stretches are compositionally biased toward basic and acidic residues: residues 693-716 (VTGKIPSKKDRDEKLTERNSKHLT) and 724-748 (LKERKDLPKPDDLTKPTKNGTVDKD). A DNA-binding region (homeobox) is located at residues 963-1033 (RKGRQSNWNP…NVKYQLRRTG (71 aa)). C2H2-type zinc fingers lie at residues 1048–1070 (FLCSDCASQFRTPSTYINHLESH) and 1115–1138 (FQCKLCNRTFVSKHAVKLHLSKTH).

It belongs to the teashirt C2H2-type zinc-finger protein family.

The protein resides in the nucleus. In terms of biological role, probable transcriptional regulator involved in developmental processes. May act as a transcriptional repressor (Potential). The chain is Teashirt homolog 1 (tshz1) from Danio rerio (Zebrafish).